The primary structure comprises 454 residues: MEYLNDKDQHLIDKLSKKINDNNQYLGFLNTNTKELTHRYHIYPAMMIPQLAKEFIELTQQVKPEIKKLYDPFMGSGTSLVEGLAHGLEVYGTDINPLSQMMSKAKTTPIEPSKLSRAISDLEYSIREMTILYHEGNYKISNLPDFDRIDFWFKEEVIISLQLIKNCINEFIEDDLKTFFMAAFSETVRHVSNTRNNEFKLYRMAPEKLEIWNPNVTEEFLKRVYRNELGNMDFYRQLENVGNYSPKTIINKQSNIKLPEEFKDEMFDIVVTSPPYGDSKTTVAYGQFSRLSAQWLDLKIDDETKINQLDNVMLGGKTDKNIIVNDVLEYLNSPTSKSVFNLISHKDEKRALEVLQFYVDLDKSIKETTRVMKPESYQFWVVANRTVKMISIPTDIIISELFKKYNVHHLYSFYRKIPNKRMPSKNSPTNKIGNHSVTMTSEIILMLKNYINKS.

This sequence belongs to the N(4)/N(6)-methyltransferase family. N(4) subfamily.

The enzyme catalyses a 2'-deoxycytidine in DNA + S-adenosyl-L-methionine = an N(4)-methyl-2'-deoxycytidine in DNA + S-adenosyl-L-homocysteine + H(+). An alpha subtype methylase, recognizes the double-stranded sequence 5'-CCWGG-3', methylatES C-2 on both strands, and protects the DNA from cleavage by the MvaI endonuclease. The sequence is that of Type II methyltransferase M.MvaI from Kocuria varians (Micrococcus varians).